Here is a 393-residue protein sequence, read N- to C-terminus: Probable alpha-1,6-mannosyltransferase MNN10 (393 aa).

The Cytoplasmic portion of the chain corresponds to 1 to 52 (MSSVPYNSQLPISNHLEYDEDEKKSRGSKLGLKYKMIYWRKTLCSSLARWRK). Residues 53–73 (LILLISLALFLFIWISDSTIS) form a helical; Signal-anchor for type II membrane protein membrane-spanning segment. The Lumenal segment spans residues 74 to 393 (RNPSTTSFQG…RKWYTRFFFP (320 aa)). Positions 77 to 97 (STTSFQGQNSNDNKLSNTGSS) are disordered.

The protein belongs to the glycosyltransferase 34 family. Component of the M-Pol II complex composed of ANP1, MNN9, MNN10, MNN11 and HOC1.

It localises to the endoplasmic reticulum membrane. The protein localises to the golgi apparatus. It is found in the cis-Golgi network membrane. Its function is as follows. Required for polarized growth and efficient budding. The M-Pol II complex possesses alpha-1,6-mannosyltransferase activity and is probably involved in the elongation of the mannan backbone of N-linked glycans on cell wall and periplasmic proteins. The chain is Probable alpha-1,6-mannosyltransferase MNN10 (MNN10) from Saccharomyces cerevisiae (strain ATCC 204508 / S288c) (Baker's yeast).